Reading from the N-terminus, the 33-residue chain is Photosystem II reaction center protein Psb30 (33 aa).

Residues Val-5 to Leu-25 form a helical membrane-spanning segment.

It belongs to the Psb30/Ycf12 family. As to quaternary structure, PSII is composed of 1 copy each of membrane proteins PsbA, PsbB, PsbC, PsbD, PsbE, PsbF, PsbH, PsbI, PsbJ, PsbK, PsbL, PsbM, PsbT, PsbX, PsbY, PsbZ, Psb30/Ycf12, peripheral proteins of the oxygen-evolving complex and a large number of cofactors. It forms dimeric complexes.

The protein resides in the plastid. It is found in the chloroplast thylakoid membrane. Its function is as follows. A core subunit of photosystem II (PSII), probably helps stabilize the reaction center. The sequence is that of Photosystem II reaction center protein Psb30 from Mesostigma viride (Green alga).